The sequence spans 140 residues: Protein PsiE homolog (140 aa).

A run of 4 helical transmembrane segments spans residues 16 to 36 (IVLQ…LSVF), 57 to 77 (YHLI…VMII), 85 to 105 (HFPL…LIII), and 110 to 130 (PLDL…LFIA).

It belongs to the PsiE family.

It localises to the cell membrane. The protein is Protein PsiE homolog of Bacillus cereus (strain ATCC 14579 / DSM 31 / CCUG 7414 / JCM 2152 / NBRC 15305 / NCIMB 9373 / NCTC 2599 / NRRL B-3711).